We begin with the raw amino-acid sequence, 215 residues long: Adenylate kinase (215 aa).

10–15 (GAGKGT) is a binding site for ATP. An NMP region spans residues 30 to 59 (STGDMLRAAIKAGTPLGLEAKKIIDEGGLV). AMP is bound by residues Thr31, Arg36, 57–59 (GLV), 85–88 (GFPR), and Gln92. An LID region spans residues 122–159 (GRRVHLASGRTYHVTYNPPKVEGKDDVTGEDLIQRDDD). ATP-binding positions include Arg123 and 132–133 (TY). Residues Arg156 and Arg167 each coordinate AMP. An ATP-binding site is contributed by Gln200.

Belongs to the adenylate kinase family. As to quaternary structure, monomer.

It localises to the cytoplasm. The enzyme catalyses AMP + ATP = 2 ADP. Its pathway is purine metabolism; AMP biosynthesis via salvage pathway; AMP from ADP: step 1/1. In terms of biological role, catalyzes the reversible transfer of the terminal phosphate group between ATP and AMP. Plays an important role in cellular energy homeostasis and in adenine nucleotide metabolism. The sequence is that of Adenylate kinase from Neisseria meningitidis serogroup B (strain ATCC BAA-335 / MC58).